The following is a 523-amino-acid chain: Nondiscriminating glutamyl-tRNA synthetase EARS2, mitochondrial (523 aa).

Residues 1-41 constitute a mitochondrion transit peptide; sequence MAALLRRLLQRERPSAASGRPVGRREANLGTDAGVAVRVRF. 40–42 lines the L-glutamate pocket; the sequence is RFA. Residues 45 to 53 carry the 'HIGH' region motif; the sequence is PTGFLHLGG. H50 lines the ATP pocket. Residues E76, 228-232, and R246 each bind L-glutamate; that span reads YHLAC. E249 is an ATP binding site. An N6-succinyllysine modification is found at K256. 284–288 lines the ATP pocket; it reads KLSKR. The 'KMSKS' region motif lies at 284–288; sequence KLSKR. At K486 the chain carries N6-acetyllysine.

It belongs to the class-I aminoacyl-tRNA synthetase family. Glutamate--tRNA ligase type 1 subfamily.

It localises to the mitochondrion matrix. It catalyses the reaction tRNA(Glx) + L-glutamate + ATP = L-glutamyl-tRNA(Glx) + AMP + diphosphate. The enzyme catalyses tRNA(Glu) + L-glutamate + ATP = L-glutamyl-tRNA(Glu) + AMP + diphosphate. It carries out the reaction tRNA(Gln) + L-glutamate + ATP = L-glutamyl-tRNA(Gln) + AMP + diphosphate. In terms of biological role, non-discriminating glutamyl-tRNA synthetase that catalyzes aminoacylation of both mitochondrial tRNA(Glu) and tRNA(Gln) and participates in RNA aminoacylation for mitochondrial protein translation. Attachs glutamate to tRNA(Glu) or tRNA(Gln) in a two-step reaction: glutamate is first activated by ATP to form Glu-AMP and then transferred to the acceptor end of tRNA(Glu) or tRNA(Gln). In vitro, cytoplasmic tRNA(Gln) is slightly glutamylated, but with low activity. This is Nondiscriminating glutamyl-tRNA synthetase EARS2, mitochondrial from Homo sapiens (Human).